Consider the following 206-residue polypeptide: GTP-binding protein Rho3 (206 aa).

24-31 (GDGACGKT) contacts GTP. The Effector region signature appears at 46–54 (YEPTVFENY). GTP contacts are provided by residues 71–75 (DTAGQ) and 129–132 (SKCD). Cys203 is subject to Cysteine methyl ester. A lipid anchor (S-geranylgeranyl cysteine) is attached at Cys203. Residues 204 to 206 (CVM) constitute a propeptide, removed in mature form.

The protein belongs to the small GTPase superfamily. Rho family.

Its subcellular location is the cell membrane. This chain is GTP-binding protein Rho3 (RHO3), found in Schizophyllum commune (Split gill fungus).